The chain runs to 415 residues: Phosphoglycerate kinase (415 aa).

(2R)-3-phosphoglycerate is bound by residues Val-23, Asp-24, Phe-25, Asn-26, Gln-39, Arg-40, Ser-63, His-64, Gly-66, Arg-67, Leu-122, Arg-123, and Arg-170. Residue Gly-213 participates in ADP binding. Gly-213 is a CDP binding site. AMP contacts are provided by Ala-214 and Lys-215. Ala-214 contacts ATP. Ala-214 is a Mg(2+) binding site. A CDP-binding site is contributed by Asp-218. Asp-218 provides a ligand contact to Mg(2+). Lys-219 is a binding site for AMP. Lys-219 contacts ATP. Position 237 (Gly-237) interacts with ADP. A CDP-binding site is contributed by Gly-237. Residues Gly-238 and Gly-311 each coordinate AMP. The ATP site is built by Gly-238 and Gly-311. CDP-binding residues include Gly-336 and Phe-341. ADP is bound at residue Phe-341. Residue Glu-342 participates in AMP binding. Residues Glu-342, Asp-373, and Thr-374 each contribute to the ATP site. Position 373 (Asp-373) interacts with Mg(2+).

This sequence belongs to the phosphoglycerate kinase family. As to quaternary structure, monomer. Mg(2+) is required as a cofactor.

Its subcellular location is the cytoplasm. It is found in the mitochondrion. The enzyme catalyses (2R)-3-phosphoglycerate + ATP = (2R)-3-phospho-glyceroyl phosphate + ADP. Its pathway is carbohydrate degradation; glycolysis; pyruvate from D-glyceraldehyde 3-phosphate: step 2/5. In terms of biological role, catalyzes one of the two ATP producing reactions in the glycolytic pathway via the reversible conversion of 1,3-diphosphoglycerate to 3-phosphoglycerate. Both L- and D- forms of purine and pyrimidine nucleotides can be used as substrates, but the activity is much lower on pyrimidines. Negatively regulates the biosynthesis of acetyl-CoA from pyruvate in the mitochondrion. The polypeptide is Phosphoglycerate kinase (PGKA) (Penicillium chrysogenum (Penicillium notatum)).